Consider the following 485-residue polypeptide: Glutamate--tRNA ligase (485 aa).

The 'HIGH' region signature appears at 11–21 (PSPTGHLHIGN). Positions 252–256 (KLSKR) match the 'KMSKS' region motif. Lysine 255 contacts ATP.

It belongs to the class-I aminoacyl-tRNA synthetase family. Glutamate--tRNA ligase type 1 subfamily. Monomer.

It is found in the cytoplasm. It carries out the reaction tRNA(Glu) + L-glutamate + ATP = L-glutamyl-tRNA(Glu) + AMP + diphosphate. Functionally, catalyzes the attachment of glutamate to tRNA(Glu) in a two-step reaction: glutamate is first activated by ATP to form Glu-AMP and then transferred to the acceptor end of tRNA(Glu). This Bacillus cereus (strain ATCC 14579 / DSM 31 / CCUG 7414 / JCM 2152 / NBRC 15305 / NCIMB 9373 / NCTC 2599 / NRRL B-3711) protein is Glutamate--tRNA ligase.